Consider the following 353-residue polypeptide: Ubiquinol oxidase 1, mitochondrial (353 aa).

The N-terminal 69 residues, Met-1–Ser-69, are a transit peptide targeting the mitochondrion. A disordered region spans residues Asp-77–Asp-99. The chain crosses the membrane as a helical span at residues Ala-178 to Cys-198. Fe cation contacts are provided by Glu-182, Glu-221, and His-224. A helical transmembrane segment spans residues Ala-240–Ser-260. Fe cation is bound by residues Glu-272, Glu-323, and His-326.

The protein belongs to the alternative oxidase family. Homodimer; disulfide-linked. Fe cation is required as a cofactor.

The protein localises to the mitochondrion inner membrane. It catalyses the reaction 2 a ubiquinol + O2 = 2 a ubiquinone + 2 H2O. Its activity is regulated as follows. Stimulated by reduction of the disulfide bond and the presence of pyruvate. Functionally, catalyzes the cyanide-resistant oxidation of ubiquinol and the reduction of molecular oxygen to water, but does not translocate protons and consequently is not linked to oxidative phosphorylation. May increase respiration when the cytochrome respiratory pathway is restricted, or in response to low temperatures. The polypeptide is Ubiquinol oxidase 1, mitochondrial (AOX1) (Nicotiana tabacum (Common tobacco)).